A 178-amino-acid chain; its full sequence is Endoribonuclease YbeY (178 aa).

3 residues coordinate Zn(2+): H118, H122, and H128. The interval 158–178 (ADRQSEKDRRLLDKSRYFDEP) is disordered.

Belongs to the endoribonuclease YbeY family. The cofactor is Zn(2+).

The protein localises to the cytoplasm. Functionally, single strand-specific metallo-endoribonuclease involved in late-stage 70S ribosome quality control and in maturation of the 3' terminus of the 16S rRNA. The polypeptide is Endoribonuclease YbeY (Mycolicibacterium smegmatis (strain ATCC 700084 / mc(2)155) (Mycobacterium smegmatis)).